The primary structure comprises 25 residues: Dermaseptin-DI5 (25 aa).

This sequence belongs to the frog skin active peptide (FSAP) family. Dermaseptin subfamily. In terms of tissue distribution, expressed by the skin glands.

It is found in the secreted. Its function is as follows. Antibacterial peptide with activity against Gram-positive bacteria S.aureus and E.faecalis, and Gram-negative bacteria P.aeruginosa and E.coli. The sequence is that of Dermaseptin-DI5 from Phyllomedusa distincta (Monkey frog).